Reading from the N-terminus, the 219-residue chain is MVGASTLAHDVRLQALRLYLVTDQFCAGGRTLADVVAAAVQGGVTCVQLREKQLNTRDFLAQALALKDLLAPHGIPLVINDRIDVALACGAQGVHLGQSDMPVTQARRLLPPEVFIGWSVETLEDVARSAELPVDYLGVSPIFATPTKTDTLPPWGLEGLRQVRRATTVPLVAIGGIHVGNAREVLLAGADGLAVVSALCAAQDPCVAALRLRQLIDAV.

4-amino-2-methyl-5-(diphosphooxymethyl)pyrimidine-binding positions include 48–52 and Asn-80; that span reads QLREK. Residues Asp-81 and Asp-100 each coordinate Mg(2+). Ser-119 lines the 4-amino-2-methyl-5-(diphosphooxymethyl)pyrimidine pocket. 145 to 147 provides a ligand contact to 2-[(2R,5Z)-2-carboxy-4-methylthiazol-5(2H)-ylidene]ethyl phosphate; sequence TPT. Lys-148 is a 4-amino-2-methyl-5-(diphosphooxymethyl)pyrimidine binding site. 2-[(2R,5Z)-2-carboxy-4-methylthiazol-5(2H)-ylidene]ethyl phosphate-binding positions include Gly-176 and 196–197; that span reads VS.

The protein belongs to the thiamine-phosphate synthase family. Requires Mg(2+) as cofactor.

It carries out the reaction 2-[(2R,5Z)-2-carboxy-4-methylthiazol-5(2H)-ylidene]ethyl phosphate + 4-amino-2-methyl-5-(diphosphooxymethyl)pyrimidine + 2 H(+) = thiamine phosphate + CO2 + diphosphate. The enzyme catalyses 2-(2-carboxy-4-methylthiazol-5-yl)ethyl phosphate + 4-amino-2-methyl-5-(diphosphooxymethyl)pyrimidine + 2 H(+) = thiamine phosphate + CO2 + diphosphate. It catalyses the reaction 4-methyl-5-(2-phosphooxyethyl)-thiazole + 4-amino-2-methyl-5-(diphosphooxymethyl)pyrimidine + H(+) = thiamine phosphate + diphosphate. Its pathway is cofactor biosynthesis; thiamine diphosphate biosynthesis; thiamine phosphate from 4-amino-2-methyl-5-diphosphomethylpyrimidine and 4-methyl-5-(2-phosphoethyl)-thiazole: step 1/1. Its function is as follows. Condenses 4-methyl-5-(beta-hydroxyethyl)thiazole monophosphate (THZ-P) and 2-methyl-4-amino-5-hydroxymethyl pyrimidine pyrophosphate (HMP-PP) to form thiamine monophosphate (TMP). This chain is Thiamine-phosphate synthase, found in Albidiferax ferrireducens (strain ATCC BAA-621 / DSM 15236 / T118) (Rhodoferax ferrireducens).